The chain runs to 326 residues: Putative ABC transporter ATP-binding protein MA_4020 (326 aa).

The segment covering 1 to 12 (MTISTLSSSYGN) has biased composition (polar residues). Residues 1 to 34 (MTISTLSSSYGNAQDVPAEDSDRHGSIEPGSEKA) form a disordered region. Residues 46–281 (LEVKNLCHRY…PELLRKAHLR (236 aa)) enclose the ABC transporter domain. Position 80-87 (80-87 (GANGAGKS)) interacts with ATP.

The protein belongs to the ABC transporter superfamily.

It localises to the cell membrane. In terms of biological role, probably part of an ABC transporter complex. Responsible for energy coupling to the transport system. This is Putative ABC transporter ATP-binding protein MA_4020 from Methanosarcina acetivorans (strain ATCC 35395 / DSM 2834 / JCM 12185 / C2A).